The chain runs to 465 residues: MIPVRGLEGRKVAVLGLGRSGLATARALQAGGAEPLLWDDSPEARANAEGQGFAVTDLTRERAFEDVALLVTSPGIPHLYPAPNPVIARAMAAGVPVDNDIGLFFRSFATRDWDAFDQMPRVVCVTGSNGKSTTTALIHHILAESGRPTQMAGNIGRGVLDLDPARDGEVVVLELSSYQTDLARALTPDVAVFTNLSPDHLDRHGGMGGYFAAKRRLFAEGGPDRAVIGVDEPEGLYLAGQLSVAPEDDRVIRISAGQKLERFGWAVFARKGFLAEWRKGRQMASIDLRAMPGLPGAHNHQNACAAYAACRTLGLAPRQIEEALGSFKGLPHRSQLVGERNGVRFVNDSKATNVDSAAKALQAFPKIRWIAGGLGKDGGIAALRPHLDAVVKAYLIGHSARDFALQMGATDHEICETMDRAVVRAAEEAQPGEVVLLAPAAASFDQYPNFEKRGEDFMERVKALL.

127–133 contacts ATP; it reads GSNGKST.

This sequence belongs to the MurCDEF family.

The protein resides in the cytoplasm. It catalyses the reaction UDP-N-acetyl-alpha-D-muramoyl-L-alanine + D-glutamate + ATP = UDP-N-acetyl-alpha-D-muramoyl-L-alanyl-D-glutamate + ADP + phosphate + H(+). It participates in cell wall biogenesis; peptidoglycan biosynthesis. Its function is as follows. Cell wall formation. Catalyzes the addition of glutamate to the nucleotide precursor UDP-N-acetylmuramoyl-L-alanine (UMA). The polypeptide is UDP-N-acetylmuramoylalanine--D-glutamate ligase (Cereibacter sphaeroides (strain ATCC 17025 / ATH 2.4.3) (Rhodobacter sphaeroides)).